Here is a 465-residue protein sequence, read N- to C-terminus: Methionine aminopeptidase 2-1 (465 aa).

Residues 1 to 100 form a disordered region; sequence MGSKTAENES…QSSPPRIPLA (100 aa). Basic and acidic residues predominate over residues 31–40; that stretch reads RGAHWSRDGD. Over residues 75–87 the composition is skewed to basic residues; it reads SKKRKKRPKKKTS. Residue His216 coordinates substrate. A divalent metal cation is bound by residues Asp237, Asp248, and His317. Position 325 (His325) interacts with substrate. A divalent metal cation-binding residues include Glu350 and Glu446.

This sequence belongs to the peptidase M24A family. Methionine aminopeptidase eukaryotic type 2 subfamily. Co(2+) serves as cofactor. The cofactor is Zn(2+). Mn(2+) is required as a cofactor. Requires Fe(2+) as cofactor.

The protein resides in the cytoplasm. The catalysed reaction is Release of N-terminal amino acids, preferentially methionine, from peptides and arylamides.. Its function is as follows. Cotranslationally removes the N-terminal methionine from nascent proteins. The N-terminal methionine is often cleaved when the second residue in the primary sequence is small and uncharged (Met-Ala-, Cys, Gly, Pro, Ser, Thr, or Val). This chain is Methionine aminopeptidase 2-1, found in Penicillium rubens (strain ATCC 28089 / DSM 1075 / NRRL 1951 / Wisconsin 54-1255) (Penicillium chrysogenum).